The sequence spans 264 residues: JmjC domain-containing protein 8 (264 aa).

Positions Met-1–Ala-23 are cleaved as a signal peptide. 3 N-linked (GlcNAc...) asparagine glycosylation sites follow: Asn-130, Asn-140, and Asn-209. In terms of domain architecture, JmjC spans Asp-131–Gly-264.

As to quaternary structure, oligomer. Dimer. Interacts with PKM; regulates angiogenesis and metabolism. N-glycosylated.

It localises to the endoplasmic reticulum lumen. It is found in the cytoplasm. Its function is as follows. Functions as a positive regulator of TNF-induced NF-kappa-B signaling. Regulates angiogenesis and cellular metabolism through interaction with PKM. This is JmjC domain-containing protein 8 from Homo sapiens (Human).